A 230-amino-acid polypeptide reads, in one-letter code: Large ribosomal subunit protein uL1 (230 aa).

This sequence belongs to the universal ribosomal protein uL1 family. As to quaternary structure, part of the 50S ribosomal subunit.

Its function is as follows. Binds directly to 23S rRNA. The L1 stalk is quite mobile in the ribosome, and is involved in E site tRNA release. In terms of biological role, protein L1 is also a translational repressor protein, it controls the translation of the L11 operon by binding to its mRNA. The protein is Large ribosomal subunit protein uL1 of Onion yellows phytoplasma (strain OY-M).